The following is a 155-amino-acid chain: Endoribonuclease YbeY (155 aa).

Residues histidine 114, histidine 118, and histidine 124 each coordinate Zn(2+).

The protein belongs to the endoribonuclease YbeY family. Zn(2+) is required as a cofactor.

It localises to the cytoplasm. Single strand-specific metallo-endoribonuclease involved in late-stage 70S ribosome quality control and in maturation of the 3' terminus of the 16S rRNA. The chain is Endoribonuclease YbeY from Escherichia coli O7:K1 (strain IAI39 / ExPEC).